We begin with the raw amino-acid sequence, 137 residues long: Large ribosomal subunit protein uL16 (137 aa).

The protein belongs to the universal ribosomal protein uL16 family. Part of the 50S ribosomal subunit.

Binds 23S rRNA and is also seen to make contacts with the A and possibly P site tRNAs. In Rhodopseudomonas palustris (strain BisB18), this protein is Large ribosomal subunit protein uL16.